The following is a 294-amino-acid chain: Enoyl-CoA hydratase domain-containing protein 3, mitochondrial (294 aa).

The transit peptide at 1 to 61 (MSWLRSCGER…IILNNPQQRN (61 aa)) directs the protein to the mitochondrion.

Belongs to the enoyl-CoA hydratase/isomerase family.

Its subcellular location is the mitochondrion. Its function is as follows. May play a role in fatty acid biosynthesis and insulin sensitivity. The protein is Enoyl-CoA hydratase domain-containing protein 3, mitochondrial (echdc3) of Xenopus laevis (African clawed frog).